Reading from the N-terminus, the 869-residue chain is Facilitated trehalose transporter Tret1 (869 aa).

Disordered regions lie at residues 1 to 214 (MSGR…QKAT) and 258 to 315 (KESS…LIHR). At 1–404 (MSGRDNRGAG…VYRPTTNPIY (404 aa)) the chain is on the cytoplasmic side. Residues 25 to 43 (KLKEKLTRAGDDQGYHRVE) show a composition bias toward basic and acidic residues. 3 stretches are compositionally biased toward low complexity: residues 44 to 57 (SNLSTSNTATSLDT), 79 to 92 (PQQQQQQQQRQQLR), and 118 to 127 (PFQQQQQRTP). Composition is skewed to basic and acidic residues over residues 147-156 (EIREHRDRQQ) and 258-291 (KESSSEEEFHKTRREFQGRKHQSLDPRVTFKLDK). Phosphoserine occurs at positions 260, 261, 262, 332, and 334. The interval 336-368 (EDFHTSRQHFQQQRSISTDSRKSRRPYEMDEMG) is disordered. A compositionally biased stretch (polar residues) spans 343 to 353 (QHFQQQRSIST). Basic and acidic residues predominate over residues 354–368 (DSRKSRRPYEMDEMG). The helical transmembrane segment at 405–425 (IWTQVLAALSVSLGSLVVGFV) threads the bilayer. Residues 426–452 (SAYTSPALVSMTNRNMTSFEVTPQAAS) lie on the Extracellular side of the membrane. Asn440 is a glycosylation site (N-linked (GlcNAc...) asparagine). The chain crosses the membrane as a helical span at residues 453–473 (WVGGIMPLAGLAGGIAGGPFI). The Cytoplasmic segment spans residues 474-485 (EYLGRRNTILAT). A helical transmembrane segment spans residues 486 to 506 (AIPFIVSSLLIACAVNVAMVL). Over 507 to 509 (AGR) the chain is Extracellular. A helical membrane pass occupies residues 510–530 (FLAGFCVGIASLSLPVYLGET). Residues 531–536 (VQPEVR) are Cytoplasmic-facing. A helical membrane pass occupies residues 537-557 (GTLGLLPTAFGNIGILLCFVA). At 558 to 564 (GTYMDWS) the chain is on the extracellular side. A helical transmembrane segment spans residues 565–585 (MLAFLGAALPVPFLILMFLIP). Residues 586 to 654 (ETPRWFVSRG…NLKPLSISLG (69 aa)) lie on the Cytoplasmic side of the membrane. A helical transmembrane segment spans residues 655-675 (LMFFQQLSGINAVIFYTVSIF). Over 676-685 (KDAGSTIDGN) the chain is Extracellular. A helical membrane pass occupies residues 686–706 (LCTIIVGIVNFMATFIATLLI). Topologically, residues 707–712 (DRAGRK) are cytoplasmic. The chain crosses the membrane as a helical span at residues 713–733 (ILLYVSNIAMIITLFVLGGFF). Over 734–752 (YCKSHGQDVSQLGWLPLSC) the chain is Extracellular. A helical transmembrane segment spans residues 753 to 773 (FVIYILGFSLGFGPIPWLMMG). Residues 774–779 (EILPSK) are Cytoplasmic-facing. The helical transmembrane segment at 780–800 (IRGSAASVATAFNWSCTFVVT) threads the bilayer. Topologically, residues 801–813 (KTFQDMIDFMGAH) are extracellular. A helical transmembrane segment spans residues 814–834 (GAFWLFGSICFIGLFFVILYV). The Cytoplasmic portion of the chain corresponds to 835 to 869 (PETQGKTLEDIERKMMGRVRRMSSVANMKPLAFNM). Ser857 and Ser858 each carry phosphoserine.

It belongs to the major facilitator superfamily. Sugar transporter (TC 2.A.1.1) family. Trehalose transporter subfamily.

Its subcellular location is the cell membrane. Low-capacity facilitative transporter for trehalose. Does not transport maltose, sucrose or lactose. Mediates the bidirectional transfer of trehalose. Responsible for the transport of trehalose synthesized in the fat body and the incorporation of trehalose into other tissues that require a carbon source, thereby regulating trehalose levels in the hemolymph. The sequence is that of Facilitated trehalose transporter Tret1 from Drosophila persimilis (Fruit fly).